The sequence spans 309 residues: Pantothenate synthetase (309 aa).

Threonine 2 is modified (N-acetylthreonine). Residue 40–47 (MGALHEGH) coordinates ATP. The active-site Proton donor is the histidine 47. Glutamine 72 is a binding site for (R)-pantoate. Glutamine 72 contributes to the beta-alanine binding site. Residues aspartate 88, aspartate 89, and glutamine 92 each coordinate Mg(2+). 158–161 (GEKD) is a binding site for ATP. Residue glutamine 164 participates in (R)-pantoate binding. Residues valine 187 and 195–198 (MSSR) contribute to the ATP site.

Belongs to the pantothenate synthetase family.

It localises to the cytoplasm. It catalyses the reaction (R)-pantoate + beta-alanine + ATP = (R)-pantothenate + AMP + diphosphate + H(+). It participates in cofactor biosynthesis; (R)-pantothenate biosynthesis; (R)-pantothenate from (R)-pantoate and beta-alanine: step 1/1. With respect to regulation, pantothenate exhibits uncompetitive inhibition toward both D-pantoate and ATP, and non-competitive inhibition toward beta-alanine. AMPCPP exhibits competitive inhibition toward ATP, uncompetitive inhibition toward beta-alanine, and non-competitive inhibition toward D-pantoate. The enzyme is most active in the presence of magnesium or manganese. Other divalent cations (cobalt, nickel, zinc) are less effective. In terms of biological role, catalyzes the condensation of pantoate with beta-alanine in an ATP-dependent reaction via a pantoyl-adenylate intermediate. This Mycobacterium tuberculosis (strain ATCC 25618 / H37Rv) protein is Pantothenate synthetase (panC).